Here is a 464-residue protein sequence, read N- to C-terminus: Asparagine--tRNA ligase (464 aa).

This sequence belongs to the class-II aminoacyl-tRNA synthetase family. Homodimer.

It is found in the cytoplasm. The catalysed reaction is tRNA(Asn) + L-asparagine + ATP = L-asparaginyl-tRNA(Asn) + AMP + diphosphate + H(+). The polypeptide is Asparagine--tRNA ligase (Clostridium beijerinckii (strain ATCC 51743 / NCIMB 8052) (Clostridium acetobutylicum)).